The chain runs to 282 residues: tRNA pseudouridine synthase B (282 aa).

The active-site Nucleophile is the aspartate 36.

Belongs to the pseudouridine synthase TruB family. Type 1 subfamily.

It catalyses the reaction uridine(55) in tRNA = pseudouridine(55) in tRNA. Its function is as follows. Responsible for synthesis of pseudouridine from uracil-55 in the psi GC loop of transfer RNAs. The chain is tRNA pseudouridine synthase B from Mycoplasmopsis pulmonis (strain UAB CTIP) (Mycoplasma pulmonis).